The primary structure comprises 433 residues: MTAASRANPYSIVSLEEDGLHLVTMSGANGFGNGKVHTRRRCRNRFVKKNGQCNIAFANMDEKSQRYLADMFTTCVDIRWRYMLLIFSLAFLASWLLFGVIFWVIAVAHGDLEPAEGHGRTPCVMQVHGFMAAFLFSIETQTTIGYGLRCVTEECLVAVFMVVAQSIVGCIIDSFMIGAIMAKMARPKKRAQTLLFSHNAVVALRDGKLCLMWRVGNLRKSHIVEAHVRAQLIKPRVTEEGEYIPLDQIDIDVGFDKGLDRIFLVSPITILHEIDEASPLFGISRQDLETDDFEIVVILEGMVEATAMTTQARSSYLANEILWGHRFEPVLFEEKNQYKIDYSHFHKTYEVPSTPRCSAKDLVENKFLLPSANSFCYENELAFLSRDEEDEADGDQDGRSRDGLSPQARHDFDRLQAGGGVLEQRPYRRGSEI.

Topologically, residues 1–77 (MTAASRANPY…LADMFTTCVD (77 aa)) are cytoplasmic. A helical membrane pass occupies residues 78-104 (IRWRYMLLIFSLAFLASWLLFGVIFWV). At 105-129 (IAVAHGDLEPAEGHGRTPCVMQVHG) the chain is on the extracellular side. An intramembrane region (helical; Pore-forming) is located at residues 130 to 146 (FMAAFLFSIETQTTIGY). The Selectivity filter motif lies at 143 to 148 (TIGYGL). Residues 147–155 (GLRCVTEEC) lie on the Extracellular side of the membrane. The chain crosses the membrane as a helical span at residues 156 to 183 (LVAVFMVVAQSIVGCIIDSFMIGAIMAK). Topologically, residues 184–433 (MARPKKRAQT…QRPYRRGSEI (250 aa)) are cytoplasmic. The tract at residues 387–433 (DEEDEADGDQDGRSRDGLSPQARHDFDRLQAGGGVLEQRPYRRGSEI) is disordered. Residues 396-414 (QDGRSRDGLSPQARHDFDR) show a composition bias toward basic and acidic residues.

Belongs to the inward rectifier-type potassium channel (TC 1.A.2.1) family. KCNJ12 subfamily. In terms of assembly, can form heteromeric channels with Kir2.1/KCNJ2. Can form heteromeric channels with Kir2.2/KCNJ12. Probably phosphorylated by PKC; decreases single-channel open probability. Specifically expressed in skeletal muscle.

It is found in the cell membrane. Its subcellular location is the endoplasmic reticulum. The catalysed reaction is K(+)(in) = K(+)(out). Inward rectifier potassium channels are characterized by a greater tendency to allow potassium to flow into the cell rather than out of it. Their voltage dependence is regulated by the concentration of extracellular potassium; as external potassium is raised, the voltage range of the channel opening shifts to more positive voltages. The inward rectification is mainly due to the blockage of outward current by internal magnesium. This chain is Inward rectifier potassium channel 18 (KCNJ18), found in Homo sapiens (Human).